The sequence spans 442 residues: 5-methylthioadenosine/S-adenosylhomocysteine deaminase (442 aa).

Zn(2+) contacts are provided by His70 and His72. Substrate is bound by residues Glu99 and His191. Residue His218 participates in Zn(2+) binding. The substrate site is built by Glu221 and Asp306. Asp306 contacts Zn(2+).

The protein belongs to the metallo-dependent hydrolases superfamily. MTA/SAH deaminase family. It depends on Zn(2+) as a cofactor.

The catalysed reaction is S-adenosyl-L-homocysteine + H2O + H(+) = S-inosyl-L-homocysteine + NH4(+). The enzyme catalyses S-methyl-5'-thioadenosine + H2O + H(+) = S-methyl-5'-thioinosine + NH4(+). Functionally, catalyzes the deamination of 5-methylthioadenosine and S-adenosyl-L-homocysteine into 5-methylthioinosine and S-inosyl-L-homocysteine, respectively. Is also able to deaminate adenosine. The polypeptide is 5-methylthioadenosine/S-adenosylhomocysteine deaminase (Nitratidesulfovibrio vulgaris (strain DP4) (Desulfovibrio vulgaris)).